The following is a 137-amino-acid chain: Nucleoside diphosphate kinase (137 aa).

Positions 9, 57, 85, 91, 102, and 112 each coordinate ATP. The Pros-phosphohistidine intermediate role is filled by H115.

This sequence belongs to the NDK family. In terms of assembly, homotetramer. The cofactor is Mg(2+).

The protein resides in the cytoplasm. It catalyses the reaction a 2'-deoxyribonucleoside 5'-diphosphate + ATP = a 2'-deoxyribonucleoside 5'-triphosphate + ADP. The catalysed reaction is a ribonucleoside 5'-diphosphate + ATP = a ribonucleoside 5'-triphosphate + ADP. Its function is as follows. Major role in the synthesis of nucleoside triphosphates other than ATP. The ATP gamma phosphate is transferred to the NDP beta phosphate via a ping-pong mechanism, using a phosphorylated active-site intermediate. In Geotalea uraniireducens (strain Rf4) (Geobacter uraniireducens), this protein is Nucleoside diphosphate kinase.